Consider the following 50-residue polypeptide: uncharacterized protein (50 aa).

Positions 28–50 (SKLSPVTNGGKTIGKSNKVSKND) are disordered. Over residues 29–50 (KLSPVTNGGKTIGKSNKVSKND) the composition is skewed to polar residues.

This is an uncharacterized protein from Haemophilus influenzae (strain ATCC 51907 / DSM 11121 / KW20 / Rd).